A 150-amino-acid chain; its full sequence is D-aminoacyl-tRNA deacylase (150 aa).

Residues 137 to 138 carry the Gly-cisPro motif, important for rejection of L-amino acids motif; it reads GP.

It belongs to the DTD family. Homodimer.

It is found in the cytoplasm. It carries out the reaction glycyl-tRNA(Ala) + H2O = tRNA(Ala) + glycine + H(+). It catalyses the reaction a D-aminoacyl-tRNA + H2O = a tRNA + a D-alpha-amino acid + H(+). Functionally, an aminoacyl-tRNA editing enzyme that deacylates mischarged D-aminoacyl-tRNAs. Also deacylates mischarged glycyl-tRNA(Ala), protecting cells against glycine mischarging by AlaRS. Acts via tRNA-based rather than protein-based catalysis; rejects L-amino acids rather than detecting D-amino acids in the active site. By recycling D-aminoacyl-tRNA to D-amino acids and free tRNA molecules, this enzyme counteracts the toxicity associated with the formation of D-aminoacyl-tRNA entities in vivo and helps enforce protein L-homochirality. The chain is D-aminoacyl-tRNA deacylase from Geotalea daltonii (strain DSM 22248 / JCM 15807 / FRC-32) (Geobacter daltonii).